We begin with the raw amino-acid sequence, 485 residues long: Glutamyl-tRNA(Gln) amidotransferase subunit A (485 aa).

Residues Lys-79 and Ser-154 each act as charge relay system in the active site. The active-site Acyl-ester intermediate is Ser-178.

This sequence belongs to the amidase family. GatA subfamily. Heterotrimer of A, B and C subunits.

It carries out the reaction L-glutamyl-tRNA(Gln) + L-glutamine + ATP + H2O = L-glutaminyl-tRNA(Gln) + L-glutamate + ADP + phosphate + H(+). Allows the formation of correctly charged Gln-tRNA(Gln) through the transamidation of misacylated Glu-tRNA(Gln) in organisms which lack glutaminyl-tRNA synthetase. The reaction takes place in the presence of glutamine and ATP through an activated gamma-phospho-Glu-tRNA(Gln). This Geobacillus thermodenitrificans (strain NG80-2) protein is Glutamyl-tRNA(Gln) amidotransferase subunit A.